The chain runs to 504 residues: Glutamate--tRNA ligase (504 aa).

Positions Pro-9–Thr-19 match the 'HIGH' region motif. Residues Lys-248–Arg-252 carry the 'KMSKS' region motif. Lys-251 contacts ATP.

Belongs to the class-I aminoacyl-tRNA synthetase family. Glutamate--tRNA ligase type 1 subfamily. As to quaternary structure, monomer.

Its subcellular location is the cytoplasm. It carries out the reaction tRNA(Glu) + L-glutamate + ATP = L-glutamyl-tRNA(Glu) + AMP + diphosphate. Functionally, catalyzes the attachment of glutamate to tRNA(Glu) in a two-step reaction: glutamate is first activated by ATP to form Glu-AMP and then transferred to the acceptor end of tRNA(Glu). This is Glutamate--tRNA ligase from Acidothermus cellulolyticus (strain ATCC 43068 / DSM 8971 / 11B).